The primary structure comprises 348 residues: 2-methyl-6-phytyl-1,4-hydroquinone methyltransferase 2, chloroplastic (348 aa).

Residues 1-48 are disordered; it reads MAMASSAYAPAGGVGTHSAPGRIRPPRGLGFSTTTTKSRPLVLTRRGG. A chloroplast-targeting transit peptide spans 1 to 59; that stretch reads MAMASSAYAPAGGVGTHSAPGRIRPPRGLGFSTTTTKSRPLVLTRRGGGGGNISVARLR. Over 60–317 the chain is Chloroplast intermembrane; sequence CAASSSSAAA…PVNPITFLFR (258 aa). The tract at residues 125–134 is SAM motif I; it reads VVDVGGGTGF. Residues 170–183 are SAM motif II; that stretch reads VTIMEGDAEDLPFP. The interval 211–224 is SAM motif III; that stretch reads RVLRLGGVACMIGP. A helical transmembrane segment spans residues 318-338; that stretch reads FLMGTICAAYYVLVPIYMWIK. At 339 to 348 the chain is on the stromal side; sequence DQIVPKGMPI.

Belongs to the class I-like SAM-binding methyltransferase superfamily. MPBQ/MBSQ MT family.

The protein resides in the plastid. It is found in the chloroplast inner membrane. It catalyses the reaction 2-methyl-6-phytyl-1,4-benzene-1,4-diol + S-adenosyl-L-methionine = 2,3-dimethyl-6-phytylbenzene-1,4-diol + S-adenosyl-L-homocysteine + H(+). The enzyme catalyses 2-methyl-6-(all-trans-nonaprenyl)benzene-1,4-diol + S-adenosyl-L-methionine = plastoquinol-9 + S-adenosyl-L-homocysteine + H(+). It carries out the reaction 6-geranylgeranyl-2-methylbenzene-1,4-diol + S-adenosyl-L-methionine = 6-geranylgeranyl-2,3-dimethylbenzene-1,4-diol + S-adenosyl-L-homocysteine + H(+). The protein operates within cofactor biosynthesis; tocopherol biosynthesis. Functionally, involved in a key methylation step in both tocopherols (vitamin E) and plastoquinone synthesis. Catalyzes the conversion of 2-methyl-6-phytyl-1,4-hydroquinone (MPBQ) to 2,3-dimethyl-6-phytyl-1,4-hydroquinone (DMPQ, a substrate for tocopherol cyclase), and 2-methyl-6-solanyl-1,4-benzoquinone (MSBQ) to plastoquinone. In Oryza sativa subsp. japonica (Rice), this protein is 2-methyl-6-phytyl-1,4-hydroquinone methyltransferase 2, chloroplastic.